The following is a 220-amino-acid chain: MGRLRKDYQDELRLFNSQEFYVLNPNQYKGLWNQQIFKNNNNIEIEVGTGKGTFIFNKALKNKNINFIAIDKYPTILAKLLNKLESCSETLTNIKIISIDAKNINDIFDKSEISKIYLNFVDPWPKTHHEKFRLTNSFYLNLFLPLLKQDGLIEFKTDNLNFFNYSLSVARENSFCLTFATKNLYSSAHAKDNIQTEYERKWSNRGYKINKLVIKNNISQ.

S-adenosyl-L-methionine-binding residues include glutamate 46, aspartate 71, aspartate 100, and aspartate 122. Aspartate 122 is a catalytic residue. Substrate-binding positions include lysine 126, aspartate 158, and 196 to 199; that span reads TEYE.

This sequence belongs to the class I-like SAM-binding methyltransferase superfamily. TrmB family.

It catalyses the reaction guanosine(46) in tRNA + S-adenosyl-L-methionine = N(7)-methylguanosine(46) in tRNA + S-adenosyl-L-homocysteine. It participates in tRNA modification; N(7)-methylguanine-tRNA biosynthesis. In terms of biological role, catalyzes the formation of N(7)-methylguanine at position 46 (m7G46) in tRNA. The protein is tRNA (guanine-N(7)-)-methyltransferase of Malacoplasma penetrans (strain HF-2) (Mycoplasma penetrans).